We begin with the raw amino-acid sequence, 190 residues long: MAGLLTLLGPAGRVSTRLRPLAPWLLGTATSCAPPLWALALSHPVPDARLLRTARGDCLSRQEPNRTPEPGGSVTGTEKKLSRTQQLKKVFQEYGAVGVSMHIGISLVSLGIFYTVVSSGIDMSAILLKLGFKESLVQSKMAAGTSTFVVAYAIHKLFAPVRISITLVSVPFVVRYFRSVGLFKPPATKP.

The transit peptide at 1–58 directs the protein to the mitochondrion; sequence MAGLLTLLGPAGRVSTRLRPLAPWLLGTATSCAPPLWALALSHPVPDARLLRTARGDC. Residues 56–66 show a composition bias toward basic and acidic residues; it reads GDCLSRQEPNR. The segment at 56–81 is disordered; that stretch reads GDCLSRQEPNRTPEPGGSVTGTEKKL. One can recognise a DUF1279 domain in the interval 78–189; it reads EKKLSRTQQL…VGLFKPPATK (112 aa). A run of 2 helical transmembrane segments spans residues 97–117 and 148–168; these read VGVS…YTVV and FVVA…ITLV.

Belongs to the FAM210 family. Expressed in late erythroblast differentiation stages.

It is found in the mitochondrion. The protein localises to the mitochondrion outer membrane. Plays a role in erythroid differentiation. Involved in cell proliferation and tumor cell growth suppression. Involved in the metabolic reprogramming of cancer cells in a PDK4-dependent manner. This Mus musculus (Mouse) protein is Protein FAM210B, mitochondrial.